The sequence spans 116 residues: Orphan antitoxin YagB (116 aa).

This sequence belongs to the CbeA/YafW/YfjZ antitoxin family.

In terms of biological role, putative antitoxin component of a type IV toxin-antitoxin (TA) system; its cognate toxin is unknown. The polypeptide is Orphan antitoxin YagB (yagB) (Escherichia coli (strain K12)).